The following is a 472-amino-acid chain: UDP-N-acetylmuramate--L-alanine ligase (472 aa).

118–124 is a binding site for ATP; sequence GTHGKTT.

The protein belongs to the MurCDEF family.

It localises to the cytoplasm. The catalysed reaction is UDP-N-acetyl-alpha-D-muramate + L-alanine + ATP = UDP-N-acetyl-alpha-D-muramoyl-L-alanine + ADP + phosphate + H(+). It functions in the pathway cell wall biogenesis; peptidoglycan biosynthesis. Functionally, cell wall formation. The polypeptide is UDP-N-acetylmuramate--L-alanine ligase (Methylococcus capsulatus (strain ATCC 33009 / NCIMB 11132 / Bath)).